A 392-amino-acid chain; its full sequence is Phospho-N-acetylmuramoyl-pentapeptide-transferase (392 aa).

10 consecutive transmembrane segments (helical) span residues 28–48 (RALMAAMTALLIGLLAGPFVI), 76–96 (TMGGVLILLAIGISTLLWFDL), 100–120 (FVWIVLLVTLGFGAIGWVDDW), 137–157 (YLWQSVVGLIAALYLVFSISE), 193–213 (ISYPLGVFGFVILTYLVIVGS), 225–245 (GLAIMPVVMVGSSLGVFAYVT), 262–282 (SGELLIFCAAMAGSGLAFLWF), 289–309 (VFMGDVGALALGAALGTIAVI), 314–334 (IVLAIMGGIFVVEALSVMLQV), and 369–389 (QVVVRFWIITMLLCLVGLSTL).

It belongs to the glycosyltransferase 4 family. MraY subfamily. Requires Mg(2+) as cofactor.

It localises to the cell inner membrane. It catalyses the reaction UDP-N-acetyl-alpha-D-muramoyl-L-alanyl-gamma-D-glutamyl-meso-2,6-diaminopimeloyl-D-alanyl-D-alanine + di-trans,octa-cis-undecaprenyl phosphate = di-trans,octa-cis-undecaprenyl diphospho-N-acetyl-alpha-D-muramoyl-L-alanyl-D-glutamyl-meso-2,6-diaminopimeloyl-D-alanyl-D-alanine + UMP. Its pathway is cell wall biogenesis; peptidoglycan biosynthesis. In terms of biological role, catalyzes the initial step of the lipid cycle reactions in the biosynthesis of the cell wall peptidoglycan: transfers peptidoglycan precursor phospho-MurNAc-pentapeptide from UDP-MurNAc-pentapeptide onto the lipid carrier undecaprenyl phosphate, yielding undecaprenyl-pyrophosphoryl-MurNAc-pentapeptide, known as lipid I. This chain is Phospho-N-acetylmuramoyl-pentapeptide-transferase, found in Polaromonas naphthalenivorans (strain CJ2).